An 883-amino-acid polypeptide reads, in one-letter code: MSHDLHESLRDNVRILGDSLGRTIADDLGDGFVDKIETIRGLAKRGRQDDSESRRELIEYLRALPEKDLLPVTRAFNQFLNFSNIAEQHYRARFRRVEDYKPGTQPDLGELLERIRGAGHAPRKLVETLAAMRVELVLTAHPTEVIRRTLIRKYDAIDECLTTMEGATEREEIAARARGRLEELISQAWHTDEIRHERPTPVDEAKWGFAVIENSLWQAVPDFHRELDDLLLASAGERLPLDAAPLRFASWMGGDRDGNPNVTARVTEEVLLLGRWMAADLYARDLLRLKSELSMWKANGALRAEVGSDPEPYRALLKRLLARVEATRDWAKARLDGRPFDSNVAIIETRDQLYAPLLSCYRSLCDVGLDTIANGALLDTLRRVAVFGVSLTKLDIRQEAGRHAQVFDELSDCLGLGHYRDWDEAQRQDFLLEELESPRPLIPRRWDCSAETREVIDTFRVIAREHREALGTYVISMAGQPSDVLAVALLMKEVGGDLQLPIAPLFETLDDLNRAGDVIERLLSLPGYRRMAGDGQEVMIGYSDSAKDAGQLAAAWAQYRAQEQLVGICRQHDVALTLFHGRGGTVGRGGGPAHAAILSQPPGSVNGSLRVTEQGEMIRFKFGQPDIALRSMEIYACAVLEATLLPPPDPEPVWREEMDRLSDIAHRAYVGVVREDPDFVPYFRSVTPESALGRLPLGSRPAKRRQEGGVESLRAIPWIFAWTQTRLMLPAWLGSGEAFATRLDEPGGRERLRDMRARWPFFGTYLDMLEMLLAKADPDIAAYYERRLVDEPALQALGKSLRERLSRLETVLLDILDQDTLLEHTPLIRQAIEVRNPYIDPLHGLQAELLQRNRDADGAISPELSRALMVTMAGIAAGLRNTG.

Catalysis depends on residues histidine 141 and lysine 547.

This sequence belongs to the PEPCase type 1 family. Mg(2+) serves as cofactor.

The catalysed reaction is oxaloacetate + phosphate = phosphoenolpyruvate + hydrogencarbonate. In terms of biological role, forms oxaloacetate, a four-carbon dicarboxylic acid source for the tricarboxylic acid cycle. The chain is Phosphoenolpyruvate carboxylase from Chromohalobacter salexigens (strain ATCC BAA-138 / DSM 3043 / CIP 106854 / NCIMB 13768 / 1H11).